The primary structure comprises 437 residues: Lipid II isoglutaminyl synthase (glutamine-hydrolyzing) subunit MurT (437 aa).

Zn(2+) contacts are provided by cysteine 202, cysteine 205, cysteine 224, and cysteine 226. Aspartate 349 is a catalytic residue.

It belongs to the MurCDEF family. MurT subfamily. Forms a heterodimer with GatD.

It carries out the reaction beta-D-GlcNAc-(1-&gt;4)-Mur2Ac(oyl-L-Ala-gamma-D-Glu-L-Lys-D-Ala-D-Ala)-di-trans,octa-cis-undecaprenyl diphosphate + L-glutamine + ATP + H2O = beta-D-GlcNAc-(1-&gt;4)-Mur2Ac(oyl-L-Ala-D-isoglutaminyl-L-Lys-D-Ala-D-Ala)-di-trans,octa-cis-undecaprenyl diphosphate + L-glutamate + ADP + phosphate + H(+). The catalysed reaction is beta-D-GlcNAc-(1-&gt;4)-Mur2Ac(oyl-L-Ala-gamma-D-Glu-L-Lys-D-Ala-D-Ala)-di-trans,octa-cis-undecaprenyl diphosphate + ATP = beta-D-GlcNAc-(1-&gt;4)-Mur2Ac(oyl-L-Ala-gamma-D-O-P-Glu-L-Lys-D-Ala-D-Ala)-di-trans,octa-cis-undecaprenyl diphosphate + ADP. The enzyme catalyses beta-D-GlcNAc-(1-&gt;4)-Mur2Ac(oyl-L-Ala-gamma-D-O-P-Glu-L-Lys-D-Ala-D-Ala)-di-trans,octa-cis-undecaprenyl diphosphate + NH4(+) = beta-D-GlcNAc-(1-&gt;4)-Mur2Ac(oyl-L-Ala-D-isoglutaminyl-L-Lys-D-Ala-D-Ala)-di-trans,octa-cis-undecaprenyl diphosphate + phosphate + H(+). It functions in the pathway cell wall biogenesis; peptidoglycan biosynthesis. Functionally, the lipid II isoglutaminyl synthase complex catalyzes the formation of alpha-D-isoglutamine in the cell wall lipid II stem peptide. The MurT subunit catalyzes the ATP-dependent amidation of D-glutamate residue of lipid II, converting it to an isoglutamine residue. The chain is Lipid II isoglutaminyl synthase (glutamine-hydrolyzing) subunit MurT from Staphylococcus aureus (strain COL).